The following is a 306-amino-acid chain: Glutaminase (306 aa).

7 residues coordinate substrate: Ser-64, Asn-115, Glu-159, Asn-166, Tyr-190, Tyr-242, and Val-260.

This sequence belongs to the glutaminase family. In terms of assembly, homotetramer.

It carries out the reaction L-glutamine + H2O = L-glutamate + NH4(+). This chain is Glutaminase, found in Vibrio cholerae serotype O1 (strain ATCC 39315 / El Tor Inaba N16961).